Reading from the N-terminus, the 273-residue chain is MTKLIIHLVSDSSVQTAKYAANSALAQFTSVKPKLYHWPMIRNLELLNEVLSKIEYKHGIVLYTIADQELRKTLTKFCYELKIPCISVIGKIIKEMSVFSGIEIEKEQNYNYKFDKTYFDTLNAIDYAIRHDDGQMLNELSEADIILIGPSRTSKTPTSVFLAYNGLKAANIPYVYNCPFPDFIEKDIDQLVVGLVINPNRLIEIREARLNLLQINENKSYTDFNIVQKECLEVRKICDQRNWPVIDVSTRSIEETAALIMRIYYNRKNKYNK.

149-156 serves as a coordination point for ADP; it reads GPSRTSKT.

Belongs to the pyruvate, phosphate/water dikinase regulatory protein family. PDRP subfamily.

The enzyme catalyses N(tele)-phospho-L-histidyl/L-threonyl-[pyruvate, phosphate dikinase] + ADP = N(tele)-phospho-L-histidyl/O-phospho-L-threonyl-[pyruvate, phosphate dikinase] + AMP + H(+). The catalysed reaction is N(tele)-phospho-L-histidyl/O-phospho-L-threonyl-[pyruvate, phosphate dikinase] + phosphate + H(+) = N(tele)-phospho-L-histidyl/L-threonyl-[pyruvate, phosphate dikinase] + diphosphate. Its function is as follows. Bifunctional serine/threonine kinase and phosphorylase involved in the regulation of the pyruvate, phosphate dikinase (PPDK) by catalyzing its phosphorylation/dephosphorylation. This chain is Putative pyruvate, phosphate dikinase regulatory protein, found in Rickettsia rickettsii (strain Iowa).